Here is an 85-residue protein sequence, read N- to C-terminus: DNA-directed RNA polymerase subunit Rpo11 (85 aa).

This sequence belongs to the archaeal Rpo11/eukaryotic RPB11/RPC19 RNA polymerase subunit family. As to quaternary structure, part of the RNA polymerase complex.

The protein resides in the cytoplasm. It catalyses the reaction RNA(n) + a ribonucleoside 5'-triphosphate = RNA(n+1) + diphosphate. Functionally, DNA-dependent RNA polymerase (RNAP) catalyzes the transcription of DNA into RNA using the four ribonucleoside triphosphates as substrates. This Methanothermobacter thermautotrophicus (strain ATCC 29096 / DSM 1053 / JCM 10044 / NBRC 100330 / Delta H) (Methanobacterium thermoautotrophicum) protein is DNA-directed RNA polymerase subunit Rpo11.